The chain runs to 337 residues: Putative long-chain-alcohol O-fatty-acyltransferase 10 (337 aa).

8 helical membrane-spanning segments follow: residues 7–27 (SFVK…YIPS), 38–58 (SVLP…FTIF), 59–79 (SSTT…LFAF), 82–102 (GPLL…CLPI), 142–162 (ILLL…LLTI), 228–248 (MGCM…YFYI), 254–274 (TLEV…EIAV), and 285–305 (MLLR…LFFG).

This sequence belongs to the wax synthase family.

The protein localises to the membrane. It catalyses the reaction a long chain fatty alcohol + a fatty acyl-CoA = a wax ester + CoA. Catalyzes the final step in the synthesis of long-chain linear esters (waxes). The polypeptide is Putative long-chain-alcohol O-fatty-acyltransferase 10 (Arabidopsis thaliana (Mouse-ear cress)).